A 238-amino-acid chain; its full sequence is Probable xyloglucan-specific endo-beta-1,4-glucanase A (238 aa).

A signal peptide spans Met1–Ala18. 2 N-linked (GlcNAc...) asparagine glycosylation sites follow: Asn106 and Asn171.

The protein belongs to the glycosyl hydrolase 12 (cellulase H) family.

It localises to the secreted. It catalyses the reaction xyloglucan + H2O = xyloglucan oligosaccharides.. Its function is as follows. Catalyzes endohydrolysis of 1,4-beta-D-glucosidic linkages in xyloglucan with retention of the beta-configuration of the glycosyl residues. Specific for xyloglucan and does not hydrolyze other cell wall components. The sequence is that of Probable xyloglucan-specific endo-beta-1,4-glucanase A (xgeA) from Neosartorya fischeri (strain ATCC 1020 / DSM 3700 / CBS 544.65 / FGSC A1164 / JCM 1740 / NRRL 181 / WB 181) (Aspergillus fischerianus).